The primary structure comprises 555 residues: Oxygen-dependent choline dehydrogenase (555 aa).

4-33 contacts FAD; the sequence is DYIIIGAGSAGNVLATRLTEDPDVTVLLLE. The active-site Proton acceptor is the His-473.

This sequence belongs to the GMC oxidoreductase family. The cofactor is FAD.

The catalysed reaction is choline + A = betaine aldehyde + AH2. The enzyme catalyses betaine aldehyde + NAD(+) + H2O = glycine betaine + NADH + 2 H(+). The protein operates within amine and polyamine biosynthesis; betaine biosynthesis via choline pathway; betaine aldehyde from choline (cytochrome c reductase route): step 1/1. Its function is as follows. Involved in the biosynthesis of the osmoprotectant glycine betaine. Catalyzes the oxidation of choline to betaine aldehyde and betaine aldehyde to glycine betaine at the same rate. This is Oxygen-dependent choline dehydrogenase from Proteus mirabilis (strain HI4320).